Here is a 286-residue protein sequence, read N- to C-terminus: Protein METABOLIC NETWORK MODULATOR 1 (286 aa).

A compositionally biased stretch (basic and acidic residues) spans methionine 1–asparagine 10. 3 disordered regions span residues methionine 1–alanine 60, valine 123–valine 146, and glycine 181–serine 204. A compositionally biased stretch (basic residues) spans lysine 20–glutamine 29. Residues leucine 30–leucine 39 are compositionally biased toward basic and acidic residues. Basic residues predominate over residues lysine 131–glutamate 140. The span at proline 191–serine 204 shows a compositional bias: polar residues.

As to expression, mailny observed in young seedlings and in emerging leaves.

Its function is as follows. Lineage-specific modulator of primary metabolism. Influences flowering time. This Arabidopsis thaliana (Mouse-ear cress) protein is Protein METABOLIC NETWORK MODULATOR 1.